Reading from the N-terminus, the 244-residue chain is Flavin-dependent thymidylate synthase (244 aa).

In terms of domain architecture, ThyX spans valine 2–lysine 207. Residues serine 56, arginine 80–arginine 82, and glutamine 88 each bind FAD. DUMP-binding positions include glutamine 77–arginine 80, glutamine 88–arginine 92, and arginine 146. The ThyX motif signature appears at arginine 80–serine 90. Residues asparagine 162–arginine 164 and histidine 168 each bind FAD. Arginine 173 serves as a coordination point for dUMP. The active-site Involved in ionization of N3 of dUMP, leading to its activation is arginine 173.

It belongs to the thymidylate synthase ThyX family. In terms of assembly, homotetramer. It depends on FAD as a cofactor.

The enzyme catalyses dUMP + (6R)-5,10-methylene-5,6,7,8-tetrahydrofolate + NADPH + H(+) = dTMP + (6S)-5,6,7,8-tetrahydrofolate + NADP(+). It functions in the pathway pyrimidine metabolism; dTTP biosynthesis. Functionally, catalyzes the reductive methylation of 2'-deoxyuridine-5'-monophosphate (dUMP) to 2'-deoxythymidine-5'-monophosphate (dTMP) while utilizing 5,10-methylenetetrahydrofolate (mTHF) as the methyl donor, and NADPH and FADH(2) as the reductant. This chain is Flavin-dependent thymidylate synthase, found in Pyrococcus abyssi (strain GE5 / Orsay).